The sequence spans 261 residues: Small ribosomal subunit protein eS1 (261 aa).

The segment covering 1 to 18 has biased composition (basic residues); it reads MAVGKNKRISKGKKGGKK. Residues 1-23 are disordered; that stretch reads MAVGKNKRISKGKKGGKKKAADP.

It belongs to the eukaryotic ribosomal protein eS1 family. Component of the small ribosomal subunit. Mature ribosomes consist of a small (40S) and a large (60S) subunit. The 40S subunit contains about 33 different proteins and 1 molecule of RNA (18S). The 60S subunit contains about 49 different proteins and 3 molecules of RNA (25S, 5.8S and 5S).

It localises to the cytoplasm. This is Small ribosomal subunit protein eS1 (cyc07) from Nicotiana tabacum (Common tobacco).